We begin with the raw amino-acid sequence, 416 residues long: Nuclear hormone receptor family member nhr-59 (416 aa).

Residues 17–94 (QTFCQVCGQE…IGMDIQNFQF (78 aa)) constitute a DNA-binding region (nuclear receptor). NR C4-type zinc fingers lie at residues 20 to 40 (CQVC…CRAC) and 57 to 82 (CKDG…LKKC). Residues 162 to 415 (TRLQKLSSSL…FSHPELVKDV (254 aa)) form the NR LBD domain.

It belongs to the nuclear hormone receptor family.

It localises to the nucleus. Functionally, orphan nuclear receptor. The polypeptide is Nuclear hormone receptor family member nhr-59 (Caenorhabditis elegans).